Consider the following 463-residue polypeptide: Argininosuccinate lyase (463 aa).

Residues S27, N115, and T161 each coordinate 2-(N(omega)-L-arginino)succinate. The Proton acceptor role is filled by H162. S283 acts as the Proton donor in catalysis. 2-(N(omega)-L-arginino)succinate contacts are provided by N291, Y323, Q328, and K331.

This sequence belongs to the lyase 1 family. Argininosuccinate lyase subfamily. In terms of assembly, homotetramer.

The enzyme catalyses 2-(N(omega)-L-arginino)succinate = fumarate + L-arginine. It functions in the pathway amino-acid biosynthesis; L-arginine biosynthesis; L-arginine from L-ornithine and carbamoyl phosphate: step 3/3. This Saccharomyces paradoxus (Yeast) protein is Argininosuccinate lyase (ARG4).